A 316-amino-acid polypeptide reads, in one-letter code: Tyrosine recombinase XerD (316 aa).

In terms of domain architecture, Core-binding (CB) spans 4-97 (AALQTQLQGY…AVRGLHRFAV (94 aa)). Residues 118–309 (RLPKSLTVDE…TVQALREVWA (192 aa)) enclose the Tyr recombinase domain. Residues Arg-162, Lys-186, His-261, Arg-264, and His-287 contribute to the active site. Tyr-296 (O-(3'-phospho-DNA)-tyrosine intermediate) is an active-site residue.

It belongs to the 'phage' integrase family. XerD subfamily. As to quaternary structure, forms a cyclic heterotetrameric complex composed of two molecules of XerC and two molecules of XerD.

It is found in the cytoplasm. Site-specific tyrosine recombinase, which acts by catalyzing the cutting and rejoining of the recombining DNA molecules. The XerC-XerD complex is essential to convert dimers of the bacterial chromosome into monomers to permit their segregation at cell division. It also contributes to the segregational stability of plasmids. In Mycobacterium leprae (strain TN), this protein is Tyrosine recombinase XerD.